The primary structure comprises 131 residues: RxLR effector protein 62 (131 aa).

A signal peptide spans 1 to 19 (MRLDILLFTLSSSTSLALS). The short motif at 49 to 60 (RHLREEPANEAR) is the RxLR-dEER element. N61 carries N-linked (GlcNAc...) asparagine glycosylation.

Belongs to the RxLR effector family.

It is found in the secreted. The protein resides in the host cell. Functionally, secreted effector that suppresses callose deposition, a hallmark of pathogen-associated molecular pattern (PAMP)-triggered immunity (PTI) and renders host plants more susceptible to bacterial infection. Reduces host plant responsiveness to salicylic acid (SA) in haustoriated cells into which host-translocated effectors are delivered. This is RxLR effector protein 62 from Hyaloperonospora arabidopsidis (strain Emoy2) (Downy mildew agent).